The following is a 464-amino-acid chain: Dihydrolipoyllysine-residue succinyltransferase component of 2-oxoglutarate dehydrogenase complex 1, mitochondrial (464 aa).

The transit peptide at 1–86 (MMLRAVFRRA…TALQRWVRPF (86 aa)) directs the protein to the mitochondrion. The region spanning 93-168 (VVEAVVPHMG…EPGNKVARIS (76 aa)) is the Lipoyl-binding domain. K134 is subject to N6-lipoyllysine. The tract at residues 168 to 242 (STSADAVSHV…DRERRVPMTR (75 aa)) is disordered. Positions 196 to 210 (EKPKVESTKVAEKPK) are enriched in basic and acidic residues. The span at 211–220 (APSPPPPPPS) shows a compositional bias: pro residues. Residues H435 and D439 contribute to the active site.

The protein belongs to the 2-oxoacid dehydrogenase family. As to quaternary structure, forms a 24-polypeptide structural core with octahedral symmetry. Requires (R)-lipoate as cofactor.

It localises to the mitochondrion. It carries out the reaction N(6)-[(R)-dihydrolipoyl]-L-lysyl-[protein] + succinyl-CoA = N(6)-[(R)-S(8)-succinyldihydrolipoyl]-L-lysyl-[protein] + CoA. It participates in amino-acid degradation; L-lysine degradation via saccharopine pathway; glutaryl-CoA from L-lysine: step 6/6. Functionally, the 2-oxoglutarate dehydrogenase complex catalyzes the overall conversion of 2-oxoglutarate to succinyl-CoA and CO(2). It contains multiple copies of three enzymatic components: 2-oxoglutarate dehydrogenase (E1), dihydrolipoamide succinyltransferase (E2) and lipoamide dehydrogenase (E3). The polypeptide is Dihydrolipoyllysine-residue succinyltransferase component of 2-oxoglutarate dehydrogenase complex 1, mitochondrial (Arabidopsis thaliana (Mouse-ear cress)).